A 335-amino-acid chain; its full sequence is MIEFQRLHKSYSVDGRQIVALHPLDLRIGPGEVFGIIGHSGAGKSTLIRLINRLEEPSGGRLLIGDEDVTALDSQGLRALRRRIGMIFQHFNLLSARTVAGNVAFPLELVGTPRAEIDARVAELLARVGLQEQANQYPAQLSGGQKQRVGIARALATGPQILLCDEATSALDPQTTASVLQLLAQINRELGLTIVLITHEMDVIRRVCDRVAVLDAGKLVETGPVTEVFLHPKHVTTRRFVSEAEHLDEAELHRDFAAVGGRIVRLTFLGNGTYEPVLGRIARDTGVDYNILSGRVDRIKDTPYGQLIVALTGGDQTAARAGFVAAGVQVEDLRV.

In terms of domain architecture, ABC transporter spans 2–241 (IEFQRLHKSY…PKHVTTRRFV (240 aa)). 38–45 (GHSGAGKS) serves as a coordination point for ATP.

It belongs to the ABC transporter superfamily. Methionine importer (TC 3.A.1.24) family. In terms of assembly, the complex is composed of two ATP-binding proteins (MetN), two transmembrane proteins (MetI) and a solute-binding protein (MetQ).

Its subcellular location is the cell inner membrane. It catalyses the reaction L-methionine(out) + ATP + H2O = L-methionine(in) + ADP + phosphate + H(+). It carries out the reaction D-methionine(out) + ATP + H2O = D-methionine(in) + ADP + phosphate + H(+). In terms of biological role, part of the ABC transporter complex MetNIQ involved in methionine import. Responsible for energy coupling to the transport system. In Xanthomonas oryzae pv. oryzae (strain KACC10331 / KXO85), this protein is Methionine import ATP-binding protein MetN.